Reading from the N-terminus, the 335-residue chain is Stearoyl-CoA desaturase 5 (335 aa).

Residues 1-54 (MPGPAVDAEKVPFRSAKEEIRAGVGVEGSEGGGGGGGRERPGARGHRQDIVWRN) are Cytoplasmic-facing. The interval 24–44 (VGVEGSEGGGGGGGRERPGAR) is disordered. Gly residues predominate over residues 25–36 (GVEGSEGGGGGG). Position 54 (Asn54) interacts with substrate. Residues 55–75 (VFLMSLLHLAAVYSLVLIPKA) form a helical membrane-spanning segment. Residues 76-77 (QP) are Lumenal-facing. The helical transmembrane segment at 78–98 (LTLLWAYFCFLLTALGVTAGA) threads the bilayer. His99 and His104 together coordinate Fe cation. A Histidine box-1 motif is present at residues 99–104 (HRLWSH). Residues 99-198 (HRLWSHRSYK…VVRFQRKYYK (100 aa)) lie on the Cytoplasmic side of the membrane. Substrate contacts are provided by Asn127, Arg134, and Asp135. His136, His139, and His140 together coordinate Fe cation. The Histidine box-2 motif lies at 136–140 (HRVHH). Substrate is bound by residues Arg167 and Lys168. The chain crosses the membrane as a helical span at residues 199-219 (ITVVLMCFVVPTLVPWYIWGE). The Lumenal portion of the chain corresponds to 220 to 227 (SLWNSYFL). Residues 228–247 (ASILRYTISLNVTWLVNSVA) form a helical membrane-spanning segment. Trp241 serves as a coordination point for substrate. Residues His248, His277, His280, and His281 each coordinate Fe cation. The Cytoplasmic segment spans residues 248-335 (HMYGNRPYDK…RKARTGDGSA (88 aa)). A Histidine box-3 motif is present at residues 277–281 (HNYHH).

This sequence belongs to the fatty acid desaturase type 1 family. In terms of assembly, may self-associate and form homodimers. Fe(2+) is required as a cofactor. Detected in brain.

It is found in the endoplasmic reticulum membrane. The enzyme catalyses octadecanoyl-CoA + 2 Fe(II)-[cytochrome b5] + O2 + 2 H(+) = (9Z)-octadecenoyl-CoA + 2 Fe(III)-[cytochrome b5] + 2 H2O. It carries out the reaction hexadecanoyl-CoA + 2 Fe(II)-[cytochrome b5] + O2 + 2 H(+) = (9Z)-hexadecenoyl-CoA + 2 Fe(III)-[cytochrome b5] + 2 H2O. Stearoyl-CoA desaturase that utilizes O(2) and electrons from reduced cytochrome b5 to introduce the first double bond into saturated fatty acyl-CoA substrates. Catalyzes the insertion of a cis double bond at the delta-9 position into fatty acyl-CoA substrates including palmitoyl-CoA and stearoyl-CoA. Gives rise to a mixture of 16:1 and 18:1 unsaturated fatty acids. Involved in neuronal cell proliferation and differentiation through down-regulation of EGFR/AKT/MAPK and Wnt signaling pathways. This is Stearoyl-CoA desaturase 5 (SCD5) from Bos taurus (Bovine).